The chain runs to 120 residues: Large ribosomal subunit protein uL14 (120 aa).

Belongs to the universal ribosomal protein uL14 family. Part of the 50S ribosomal subunit. Forms a cluster with proteins L3 and L19. In the 70S ribosome, L14 and L19 interact and together make contacts with the 16S rRNA in bridges B5 and B8.

Functionally, binds to 23S rRNA. Forms part of two intersubunit bridges in the 70S ribosome. The chain is Large ribosomal subunit protein uL14 from Dictyoglomus turgidum (strain DSM 6724 / Z-1310).